Here is a 156-residue protein sequence, read N- to C-terminus: Endoribonuclease YbeY (156 aa).

Zn(2+) is bound by residues His117, His121, and His127.

This sequence belongs to the endoribonuclease YbeY family. Requires Zn(2+) as cofactor.

The protein resides in the cytoplasm. Single strand-specific metallo-endoribonuclease involved in late-stage 70S ribosome quality control and in maturation of the 3' terminus of the 16S rRNA. The sequence is that of Endoribonuclease YbeY from Shewanella halifaxensis (strain HAW-EB4).